The following is a 274-amino-acid chain: Probable lipoprotein peptidase YaeF (274 aa).

Residues 1-20 form the signal peptide; the sequence is MDKPKAYCRLFLPSFLLLSA. Residue cysteine 21 is the site of N-palmitoyl cysteine attachment. Residue cysteine 21 is the site of S-diacylglycerol cysteine attachment. Cysteine 207 (nucleophile) is an active-site residue. Catalysis depends on histidine 257, which acts as the Proton acceptor.

Its subcellular location is the cell inner membrane. The chain is Probable lipoprotein peptidase YaeF (yaeF) from Escherichia coli (strain K12).